The following is a 466-amino-acid chain: Adenosylhomocysteinase (466 aa).

Residues threonine 57, aspartate 132, and glutamate 192 each coordinate substrate. 193–195 (TTT) contacts NAD(+). Lysine 222 and aspartate 226 together coordinate substrate. Residues asparagine 227, 256–261 (GYGDVG), glutamate 279, asparagine 314, 335–337 (IGH), and asparagine 380 each bind NAD(+).

This sequence belongs to the adenosylhomocysteinase family. It depends on NAD(+) as a cofactor.

It is found in the cytoplasm. The catalysed reaction is S-adenosyl-L-homocysteine + H2O = L-homocysteine + adenosine. Its pathway is amino-acid biosynthesis; L-homocysteine biosynthesis; L-homocysteine from S-adenosyl-L-homocysteine: step 1/1. Its function is as follows. May play a key role in the regulation of the intracellular concentration of adenosylhomocysteine. This chain is Adenosylhomocysteinase, found in Rhizobium etli (strain ATCC 51251 / DSM 11541 / JCM 21823 / NBRC 15573 / CFN 42).